The chain runs to 285 residues: GPN-loop GTPase 3 (285 aa).

13–18 (GSGKST) contacts GTP. The Gly-Pro-Asn (GPN)-loop; involved in dimer interface signature appears at 72-74 (GPN). 174 to 177 (TKMD) lines the GTP pocket. The tract at residues 262 to 285 (EPKEVDEEPSNSNFDAFFQDTADS) is disordered.

This sequence belongs to the GPN-loop GTPase family. Heterodimer with gpn1. Binds to RNA polymerase II (RNAPII).

Small GTPase required for proper localization of RNA polymerase II (RNAPII). May act at an RNAP assembly step prior to nuclear import. This is GPN-loop GTPase 3 from Danio rerio (Zebrafish).